The primary structure comprises 75 residues: Exodeoxyribonuclease 7 small subunit (75 aa).

It belongs to the XseB family. Heterooligomer composed of large and small subunits.

The protein localises to the cytoplasm. It catalyses the reaction Exonucleolytic cleavage in either 5'- to 3'- or 3'- to 5'-direction to yield nucleoside 5'-phosphates.. Functionally, bidirectionally degrades single-stranded DNA into large acid-insoluble oligonucleotides, which are then degraded further into small acid-soluble oligonucleotides. The sequence is that of Exodeoxyribonuclease 7 small subunit from Pelobacter propionicus (strain DSM 2379 / NBRC 103807 / OttBd1).